Consider the following 380-residue polypeptide: Glucose-1-phosphate adenylyltransferase (380 aa).

Residues Gly-164, 179–180 (EK), and Ser-190 contribute to the alpha-D-glucose 1-phosphate site.

Belongs to the bacterial/plant glucose-1-phosphate adenylyltransferase family. In terms of assembly, homotetramer.

The enzyme catalyses alpha-D-glucose 1-phosphate + ATP + H(+) = ADP-alpha-D-glucose + diphosphate. It participates in glycan biosynthesis; glycogen biosynthesis. Its function is as follows. Involved in the biosynthesis of ADP-glucose, a building block required for the elongation reactions to produce glycogen. Catalyzes the reaction between ATP and alpha-D-glucose 1-phosphate (G1P) to produce pyrophosphate and ADP-Glc. This chain is Glucose-1-phosphate adenylyltransferase, found in Ligilactobacillus salivarius (strain UCC118) (Lactobacillus salivarius).